Reading from the N-terminus, the 460-residue chain is MAESENRKELSESSQEEAGNQIMVEGLGEHLERGEDAAAGLGDDGKCGEEAAAGLGEEGENGEDTAAGSGEDGKKGGDTDEDSEADRPKGLIGYVLDTDFVESLPVKVKYRVLALKKLQTRAANLESKFLREFHDIERKFAEMYQPLLEKRRQIINAIYEPTEEECEYKSDSEDCDDEEMCHEEMYGNEEGMVHEYVDEDDGYEDYYYDYAVEEEEEEEEEDDIEATGEENKEEEDPKGIPDFWLTVLKNVDTLTPLIKKYDEPILKLLTDIKVKLSDPGEPLSFTLEFHFKPNEYFKNELLTKTYVLKSKLAYYDPHPYRGTAIEYSTGCEIDWNEGKNVTLKTIKKKQKHRIWGTIRTVTEDFPKDSFFNFFSPHGITSNGRDGNDDFLLGHNLRTYIIPRSVLFFSGDALESQQEGVVREVNDAIYDKIIYDNWMAAIEEVKACCKNLEALVEDIDR.

Composition is skewed to basic and acidic residues over residues 1–11 and 27–36; these read MAESENRKELS and LGEHLERGED. Disordered stretches follow at residues 1–88 and 214–238; these read MAES…ADRP and EEEEEEEEDDIEATGEENKEEEDPK. The segment covering 214-236 has biased composition (acidic residues); sequence EEEEEEEEDDIEATGEENKEEED. The short motif at 346–352 is the Nuclear localization signal element; the sequence is IKKKQKH.

This sequence belongs to the nucleosome assembly protein (NAP) family.

The protein localises to the nucleus. Functionally, acidic protein which may be involved in interactions with other proteins or DNA. The polypeptide is Nucleosome assembly protein 1-like 2 (NAP1L2) (Homo sapiens (Human)).